Here is a 148-residue protein sequence, read N- to C-terminus: Large ribosomal subunit protein uL15 (148 aa).

A disordered region spans residues 12–52 (ERKNRKRVGRGGGSGWGGTSGKGHKGQNARSGGGVPAWFEG). The segment covering 21-32 (RGGGSGWGGTSG) has biased composition (gly residues).

It belongs to the universal ribosomal protein uL15 family. As to quaternary structure, part of the 50S ribosomal subunit.

Functionally, binds to the 23S rRNA. This is Large ribosomal subunit protein uL15 from Maridesulfovibrio salexigens (strain ATCC 14822 / DSM 2638 / NCIMB 8403 / VKM B-1763) (Desulfovibrio salexigens).